The sequence spans 956 residues: Lon protease homolog, mitochondrial 1 (956 aa).

2 disordered regions span residues 37–57 and 83–123; these read NNNNNNNNNNNNNNNNNNNNN and KKKG…GNEK. Basic and acidic residues predominate over residues 91 to 123; that stretch reads NNDDNDNEKNEKNEKKVKNEKKEKNEKNDGNEK. Residues 159–357 enclose the Lon N-terminal domain; the sequence is VVIYPSNSVN…MLYHMILNEQ (199 aa). 511–518 contributes to the ATP binding site; the sequence is GPPGTGKT. One can recognise a Lon proteolytic domain in the interval 747–945; sequence VTPIGVVNGL…KDVFEVAFPN (199 aa). The segment covering 777 to 795 has biased composition (low complexity); the sequence is KPLSSLPPSQQQQNQLEPS. The interval 777–800 is disordered; sequence KPLSSLPPSQQQQNQLEPSIKTTG. Active-site residues include Ser-851 and Lys-894.

The protein belongs to the peptidase S16 family. In terms of assembly, homohexamer or homoheptamer. Organized in a ring with a central cavity.

The protein resides in the mitochondrion matrix. The enzyme catalyses Hydrolysis of proteins in presence of ATP.. Functionally, ATP-dependent serine protease that mediates the selective degradation of misfolded, unassembled or oxidatively damaged polypeptides as well as certain short-lived regulatory proteins in the mitochondrial matrix. May also have a chaperone function in the assembly of inner membrane protein complexes. Participates in the regulation of mitochondrial gene expression and in the maintenance of the integrity of the mitochondrial genome. Binds to mitochondrial DNA in a site-specific manner. The protein is Lon protease homolog, mitochondrial 1 of Dictyostelium discoideum (Social amoeba).